Here is a 371-residue protein sequence, read N- to C-terminus: Transcriptional regulator of yeast form adherence 2 (371 aa).

The segment at 16–44 (RNPAVLCSFYSKIGACRHGEKCSKKHLKP) adopts a C3H1-type 1 zinc-finger fold. Polar residues predominate over residues 94-107 (TVSQIDDSPHSNSG). The segment at 94–194 (TVSQIDDSPH…NIEDAKLEDT (101 aa)) is disordered. Acidic residues predominate over residues 115–124 (VETQEVETEN). A compositionally biased stretch (basic and acidic residues) spans 132-194 (GDVKIDHNED…NIEDAKLEDT (63 aa)). Residues 192–279 (EDTEKDKLPE…KPVYSDLSPV (88 aa)) enclose the RRM domain. The C3H1-type 2 zinc-finger motif lies at 281–309 (DFNDACCEEYRDYHDCQRGAMCNYMHVRL). Residues 337-371 (ELPGDIRSSSSTNDDETNGNENGISSTMAVLEQLS) are disordered. Over residues 355–371 (GNENGISSTMAVLEQLS) the composition is skewed to polar residues.

It localises to the nucleus. Transcription factor required for yeast cell adherence to silicone substrate. The polypeptide is Transcriptional regulator of yeast form adherence 2 (TRY2) (Candida albicans (strain SC5314 / ATCC MYA-2876) (Yeast)).